The primary structure comprises 452 residues: Translation initiation factor eIF2B subunit gamma (452 aa).

Methionine 1 is subject to N-acetylmethionine. At serine 260 the chain carries Phosphoserine.

It belongs to the eIF-2B gamma/epsilon subunits family. In terms of assembly, component of the translation initiation factor 2B (eIF2B) complex which is a heterodecamer of two sets of five different subunits: alpha, beta, gamma, delta and epsilon. Subunits alpha, beta and delta comprise a regulatory subcomplex and subunits epsilon and gamma comprise a catalytic subcomplex. Within the complex, the hexameric regulatory complex resides at the center, with the two heterodimeric catalytic subcomplexes bound on opposite sides.

Its subcellular location is the cytoplasm. The protein localises to the cytosol. Activated by the chemical integrated stress response (ISR) inhibitor ISRIB which stimulates guanine nucleotide exchange factor activity for both phosphorylated and unphosphorylated eIF2. In terms of biological role, acts as a component of the translation initiation factor 2B (eIF2B) complex, which catalyzes the exchange of GDP for GTP on the eukaryotic initiation factor 2 (eIF2) complex gamma subunit. Its guanine nucleotide exchange factor activity is repressed when bound to eIF2 complex phosphorylated on the alpha subunit, thereby limiting the amount of methionyl-initiator methionine tRNA available to the ribosome and consequently global translation is repressed. This is Translation initiation factor eIF2B subunit gamma (EIF2B3) from Homo sapiens (Human).